A 220-amino-acid chain; its full sequence is Probable septum site-determining protein MinC (220 aa).

Belongs to the MinC family. Interacts with MinD and FtsZ.

Its function is as follows. Cell division inhibitor that blocks the formation of polar Z ring septums. Rapidly oscillates between the poles of the cell to destabilize FtsZ filaments that have formed before they mature into polar Z rings. Prevents FtsZ polymerization. This chain is Probable septum site-determining protein MinC, found in Vibrio parahaemolyticus serotype O3:K6 (strain RIMD 2210633).